A 400-amino-acid chain; its full sequence is Enoyl-[acyl-carrier-protein] reductase [NADH] (400 aa).

NAD(+) is bound by residues 48–53 (GSSSGY), 74–75 (FE), 111–112 (DA), and 139–140 (LA). Residue Y225 coordinates substrate. Residue Y235 is the Proton donor of the active site. NAD(+)-binding positions include K244 and 273–275 (VVT).

The protein belongs to the TER reductase family. In terms of assembly, monomer.

The catalysed reaction is a 2,3-saturated acyl-[ACP] + NAD(+) = a (2E)-enoyl-[ACP] + NADH + H(+). Its pathway is lipid metabolism; fatty acid biosynthesis. In terms of biological role, involved in the final reduction of the elongation cycle of fatty acid synthesis (FAS II). Catalyzes the reduction of a carbon-carbon double bond in an enoyl moiety that is covalently linked to an acyl carrier protein (ACP). The sequence is that of Enoyl-[acyl-carrier-protein] reductase [NADH] from Aliivibrio salmonicida (strain LFI1238) (Vibrio salmonicida (strain LFI1238)).